We begin with the raw amino-acid sequence, 989 residues long: ATP-dependent 6-phosphofructokinase subunit alpha (989 aa).

Residues 1–585 (MPEPSISALS…SYESFLSVSK (585 aa)) form an N-terminal catalytic PFK domain 1 region. Residues Gly-220, 283 to 284 (RS), and 313 to 316 (GDGS) each bind ATP. Asp-314 contributes to the Mg(2+) binding site. Residues 359 to 361 (SID), Arg-396, 403 to 405 (MGR), Glu-460, Arg-487, and 493 to 496 (HVQR) contribute to the beta-D-fructose 6-phosphate site. Asp-361 serves as the catalytic Proton acceptor. The segment at 586 to 599 (YDDGSYLVPESSRL) is interdomain linker. The tract at residues 600-989 (NIAIIHVGAP…LSGRLSIRTT (390 aa)) is C-terminal regulatory PFK domain 2. Beta-D-fructose 2,6-bisphosphate is bound by residues Arg-670, 727–731 (TVSNN), Arg-765, 772–774 (QGG), Glu-832, Arg-858, 864–867 (HVQQ), and Arg-963.

This sequence belongs to the phosphofructokinase type A (PFKA) family. ATP-dependent PFK group I subfamily. Eukaryotic two domain clade 'E' sub-subfamily. In terms of assembly, heterododecamer of 4 alpha, 4 beta and 4 gamma chains. The gamma chain bridges the N-terminal halves of the alpha and beta subunits. Mg(2+) serves as cofactor.

It is found in the cytoplasm. The catalysed reaction is beta-D-fructose 6-phosphate + ATP = beta-D-fructose 1,6-bisphosphate + ADP + H(+). It functions in the pathway carbohydrate degradation; glycolysis; D-glyceraldehyde 3-phosphate and glycerone phosphate from D-glucose: step 3/4. Allosterically activated by ADP, AMP, or fructose 2,6-bisphosphate, and allosterically inhibited by ATP or citrate. Its function is as follows. Catalyzes the phosphorylation of D-fructose 6-phosphate to fructose 1,6-bisphosphate by ATP, the first committing step of glycolysis. Involved in the modulation of glucose-induced microautophagy of peroxisomes independent of its ability to metabolize glucose intermediates. In Komagataella phaffii (strain GS115 / ATCC 20864) (Yeast), this protein is ATP-dependent 6-phosphofructokinase subunit alpha (PFK1).